The primary structure comprises 811 residues: Beta-catenin homolog sys-1 (811 aa).

The tract at residues 1 to 105 (MHSTGEPQRG…SRGPAAPAQN (105 aa)) is disordered. A compositionally biased stretch (low complexity) spans 64–103 (QQQQMTPQALSTQQQQQVQQQQQRQLYSSPSPSRGPAAPA).

Interacts with TCF transcription factor pop-1 (via N-terminal region); interaction is direct.

It is found in the nucleus. It localises to the cytoplasm. The protein resides in the cytoplasmic granule. Its subcellular location is the cytoskeleton. The protein localises to the microtubule organizing center. It is found in the centrosome. It localises to the chromosome. The protein resides in the centromere. Its subcellular location is the kinetochore. Its function is as follows. Transcription coregulator. Part of the Wnt signaling asymmetry pathway, probably acting downstream of putative frizzled ligand mom-2, Wnt/frizzled receptors lin-17 and mom-5, and dishevelled homolog dsh-2. Activates or represses target gene expression, depending on upstream Wnt signals and interactions with transcription factors, such as pop-1. Required for the activation of Wnt-responsive genes in the E blastomere; thereby leading to a role in endoderm specification and gut development. Reciprocal distribution patterns of sys-1 and pop-1/TCF in the daughters of anterior-posterior cell divisions functions in specifying cell fate; a higher sys-1 to pop-1 ratio promotes the posterior cell fate, whereas a low sys-1 to pop-1 ratio promotes the anterior fate. Represses expression of homeobox ttx-3 in neuroblasts of the SIAD/SIBV lineage, perhaps acting by blocking its transcriptional activation by a complex consisting of ref-2 and pop-1. Required for early organization of the hermaphrodite, but not the male, gonad; involved in generation of regulatory cells, known as the distal tip cells (DTC), and in formation of the somatic gonadal primordium. Involved in regulating asymmetric divisions of the somatic gonadal precursor cells (SGP), Z1 and Z4. This is Beta-catenin homolog sys-1 from Caenorhabditis elegans.